Here is a 373-residue protein sequence, read N- to C-terminus: Aromatic amino acid aminotransferase (373 aa).

Position 212 is an N6-(pyridoxal phosphate)lysine (Lys-212).

This sequence belongs to the class-II pyridoxal-phosphate-dependent aminotransferase family. Homodimer. Pyridoxal 5'-phosphate serves as cofactor.

The enzyme catalyses an aromatic L-alpha-amino acid + 2-oxoglutarate = an aromatic oxo-acid + L-glutamate. Aminotransferase that catalyzes the conversion of aromatic amino acids and 2-oxoglutarate into corresponding aromatic oxo acids and L-glutamate. The polypeptide is Aromatic amino acid aminotransferase (Corynebacterium jeikeium (strain K411)).